The sequence spans 221 residues: Probable nicotinate-nucleotide adenylyltransferase (221 aa).

Belongs to the NadD family.

The enzyme catalyses nicotinate beta-D-ribonucleotide + ATP + H(+) = deamido-NAD(+) + diphosphate. The protein operates within cofactor biosynthesis; NAD(+) biosynthesis; deamido-NAD(+) from nicotinate D-ribonucleotide: step 1/1. Functionally, catalyzes the reversible adenylation of nicotinate mononucleotide (NaMN) to nicotinic acid adenine dinucleotide (NaAD). This Marinomonas sp. (strain MWYL1) protein is Probable nicotinate-nucleotide adenylyltransferase.